The sequence spans 82 residues: Cytochrome c oxidase-assembly factor cox-23, mitochondrial (82 aa).

Positions 1-27 (MAQAGSENKEPWNEETRAKFEGKSRSE) are disordered. The segment covering 7–27 (ENKEPWNEETRAKFEGKSRSE) has biased composition (basic and acidic residues). Residues 29–71 (LDPCQEAAQRSIRCLHRNQGDRTMCSDYFEAYRECKKQWIERR) enclose the CHCH domain. 2 short sequence motifs (cx9C motif) span residues 32-42 (CQEAAQRSIRC) and 53-63 (CSDYFEAYREC). Intrachain disulfides connect C32/C63 and C42/C53.

The protein belongs to the COX23 family.

It localises to the mitochondrion intermembrane space. Its function is as follows. Required for the assembly of cytochrome c oxidase. This Neurospora crassa (strain ATCC 24698 / 74-OR23-1A / CBS 708.71 / DSM 1257 / FGSC 987) protein is Cytochrome c oxidase-assembly factor cox-23, mitochondrial (cox-23).